A 335-amino-acid chain; its full sequence is Galactosylgalactosylxylosylprotein 3-beta-glucuronosyltransferase 3 (335 aa).

Residues 1 to 7 (MKLKLKN) are Cytoplasmic-facing. Residues 8–28 (VFLAYFLVSIAGLLYALVQLG) traverse the membrane as a helical; Signal-anchor for type II membrane protein segment. Residues 29–335 (QPCDCLPPLR…GRGSDPAIEV (307 aa)) are Lumenal-facing. Residues 82–84 (PTY), D113, R156, R161, and 194–196 (DDD) contribute to the UDP-alpha-D-glucuronate site. D196 serves as a coordination point for Mn(2+). The tract at residues 243–252 (WEPSRPFPVD) is interaction with galactose moiety of substrate glycoprotein. E281 functions as the Proton donor/acceptor in the catalytic mechanism. N300 is a glycosylation site (N-linked (GlcNAc...) asparagine). UDP-alpha-D-glucuronate is bound at residue 308-310 (HTR). A compositionally biased stretch (basic and acidic residues) spans 312-322 (EKPKMKQEEQL). Positions 312 to 335 (EKPKMKQEEQLQRQGRGSDPAIEV) are disordered.

It belongs to the glycosyltransferase 43 family. Homodimer; disulfide-linked. Interacts with PXYLP1; the interaction increases the 2-phosphoxylose phosphatase activity of PXYLP1 during completion of linkage region formation in a B3GAT3-mediated manner. Mn(2+) is required as a cofactor. N-glycosylated. Ubiquitous (but weakly expressed in all tissues examined).

The protein localises to the golgi apparatus membrane. It localises to the golgi apparatus. It is found in the cis-Golgi network. The enzyme catalyses 3-O-(beta-D-galactosyl-(1-&gt;3)-beta-D-galactosyl-(1-&gt;4)-beta-D-xylosyl)-L-seryl-[protein] + UDP-alpha-D-glucuronate = 3-O-(beta-D-GlcA-(1-&gt;3)-beta-D-Gal-(1-&gt;3)-beta-D-Gal-(1-&gt;4)-beta-D-Xyl)-L-seryl-[protein] + UDP + H(+). It functions in the pathway protein modification; protein glycosylation. Its activity is regulated as follows. Inhibited by EDTA. Its function is as follows. Glycosaminoglycans biosynthesis. Involved in forming the linkage tetrasaccharide present in heparan sulfate and chondroitin sulfate. Transfers a glucuronic acid moiety from the uridine diphosphate-glucuronic acid (UDP-GlcUA) to the common linkage region trisaccharide Gal-beta-1,3-Gal-beta-1,4-Xyl covalently bound to a Ser residue at the glycosaminylglycan attachment site of proteoglycans. Can also play a role in the biosynthesis of l2/HNK-1 carbohydrate epitope on glycoproteins. Shows strict specificity for Gal-beta-1,3-Gal-beta-1,4-Xyl, exhibiting negligible incorporation into other galactoside substrates including Galbeta1-3Gal beta1-O-benzyl, Galbeta1-4GlcNAc and Galbeta1-4Glc. Stimulates 2-phosphoxylose phosphatase activity of PXYLP1 in presence of uridine diphosphate-glucuronic acid (UDP-GlcUA) during completion of linkage region formation. The sequence is that of Galactosylgalactosylxylosylprotein 3-beta-glucuronosyltransferase 3 (B3GAT3) from Homo sapiens (Human).